Reading from the N-terminus, the 248-residue chain is 2,3-bisphosphoglycerate-dependent phosphoglycerate mutase (248 aa).

Substrate-binding positions include 9–16 (RHGHSEWN), 22–23 (TG), Arg61, 88–91 (ERHY), Lys99, 115–116 (RR), and 183–184 (GN). His10 (tele-phosphohistidine intermediate) is an active-site residue. Glu88 (proton donor/acceptor) is an active-site residue.

It belongs to the phosphoglycerate mutase family. BPG-dependent PGAM subfamily.

It catalyses the reaction (2R)-2-phosphoglycerate = (2R)-3-phosphoglycerate. It participates in carbohydrate degradation; glycolysis; pyruvate from D-glyceraldehyde 3-phosphate: step 3/5. Its function is as follows. Catalyzes the interconversion of 2-phosphoglycerate and 3-phosphoglycerate. The chain is 2,3-bisphosphoglycerate-dependent phosphoglycerate mutase from Arthrobacter sp. (strain FB24).